The primary structure comprises 91 residues: Small ribosomal subunit protein uS15 (91 aa).

This sequence belongs to the universal ribosomal protein uS15 family. Part of the 30S ribosomal subunit. Forms a bridge to the 50S subunit in the 70S ribosome, contacting the 23S rRNA.

Functionally, one of the primary rRNA binding proteins, it binds directly to 16S rRNA where it helps nucleate assembly of the platform of the 30S subunit by binding and bridging several RNA helices of the 16S rRNA. In terms of biological role, forms an intersubunit bridge (bridge B4) with the 23S rRNA of the 50S subunit in the ribosome. In Rickettsia prowazekii (strain Madrid E), this protein is Small ribosomal subunit protein uS15.